We begin with the raw amino-acid sequence, 323 residues long: MWQKNQTSLADFILEGLFDDSLTHLFLFSLTMVVFLIAVSGNTLTILLICIDPQLHTPMYFLLSQLSLMDLMHVSTIILKMATNYLSGKKSISFVGCATQHFLYLCLGGAECFLLAVMSYDRYVAICHPLRYAVLMNKKVGLMMAVMSWLGASVNSLIHMAILMHFPFCGPRKVYHFYCEFPAVVKLVCGDITVYETTVYISSILLLLPIFLISTSYVFILQSVIQMRSSGSKRNAFATCGSHLTVVSLWFGACIFSYMRPRSQCTLLQNKVGSVFYSIITPTLNSLIYTLRNKDVAKALRRVLRRDVITQCIQRLQLWLPRV.

At 1 to 25 the chain is on the extracellular side; sequence MWQKNQTSLADFILEGLFDDSLTHL. N-linked (GlcNAc...) asparagine glycosylation is present at N5. The chain crosses the membrane as a helical span at residues 26–49; it reads FLFSLTMVVFLIAVSGNTLTILLI. Over 50 to 57 the chain is Cytoplasmic; sequence CIDPQLHT. A helical membrane pass occupies residues 58–79; the sequence is PMYFLLSQLSLMDLMHVSTIIL. Residues 80–100 lie on the Extracellular side of the membrane; sequence KMATNYLSGKKSISFVGCATQ. Residues C97 and C189 are joined by a disulfide bond. A helical transmembrane segment spans residues 101–120; the sequence is HFLYLCLGGAECFLLAVMSY. The Cytoplasmic segment spans residues 121–139; that stretch reads DRYVAICHPLRYAVLMNKK. The chain crosses the membrane as a helical span at residues 140-158; that stretch reads VGLMMAVMSWLGASVNSLI. Residues 159 to 195 lie on the Extracellular side of the membrane; the sequence is HMAILMHFPFCGPRKVYHFYCEFPAVVKLVCGDITVY. The chain crosses the membrane as a helical span at residues 196-218; the sequence is ETTVYISSILLLLPIFLISTSYV. The Cytoplasmic portion of the chain corresponds to 219 to 235; it reads FILQSVIQMRSSGSKRN. The chain crosses the membrane as a helical span at residues 236–258; the sequence is AFATCGSHLTVVSLWFGACIFSY. Residues 259–271 lie on the Extracellular side of the membrane; that stretch reads MRPRSQCTLLQNK. The chain crosses the membrane as a helical span at residues 272-291; the sequence is VGSVFYSIITPTLNSLIYTL. The Cytoplasmic segment spans residues 292–323; the sequence is RNKDVAKALRRVLRRDVITQCIQRLQLWLPRV.

It belongs to the G-protein coupled receptor 1 family.

It is found in the cell membrane. Its function is as follows. Odorant receptor. This is Olfactory receptor 2AE1 (OR2AE1) from Homo sapiens (Human).